Here is a 159-residue protein sequence, read N- to C-terminus: U1 small nuclear ribonucleoprotein C (159 aa).

The Matrin-type zinc finger occupies 4–36 (FYCDYCDTYLTHDSPSVRKTHCSGRKHKENVKD). Disordered stretches follow at residues 63–95 (PPTPFAAPPAGSAMIPPPPSLGGPPRPGMMPAP) and 139–159 (MRPPTRPMMLQSRPGMARPDR). The span at 77 to 95 (IPPPPSLGGPPRPGMMPAP) shows a compositional bias: pro residues.

The protein belongs to the U1 small nuclear ribonucleoprotein C family. In terms of assembly, component of the U1 snRNP. The U1 snRNP is composed of the U1 snRNA and the 7 core Sm proteins snrpb, snrpd1, snrpd2, snrpd3, snrpe, snrpf and snrpg that assemble in a heptameric protein ring on the Sm site of the small nuclear RNA to form the core snRNP, and at least 3 U1 snRNP-specific proteins snrnp70/U1-70K, snrpa/U1-A and snrpc/U1-C. snrpc/U1-C interacts with U1 snRNA and the 5' splice-site region of the pre-mRNA.

Its subcellular location is the nucleus. Component of the spliceosomal U1 snRNP, which is essential for recognition of the pre-mRNA 5' splice-site and the subsequent assembly of the spliceosome. SNRPC/U1-C is directly involved in initial 5' splice-site recognition for both constitutive and regulated alternative splicing. The interaction with the 5' splice-site seems to precede base-pairing between the pre-mRNA and the U1 snRNA. Stimulates commitment or early (E) complex formation by stabilizing the base pairing of the 5' end of the U1 snRNA and the 5' splice-site region. In Xenopus laevis (African clawed frog), this protein is U1 small nuclear ribonucleoprotein C.